Here is a 174-residue protein sequence, read N- to C-terminus: MQAFEQKSSYERAELITCGQGNMFGPGNAQLPVPNMLMLDRISHISQTGGEFGKGEIIAELDITPDLWFFDCHFPGDPVMPGCLGLDAMWQLVGFFLAWKGNAGRGRALGAGEVKFTGQILPTASKVTYHINLKRVIERKLVMGIADGRVAVDGKEIYFAKDLRVGLFTNTDSF.

His-73 is a catalytic residue.

Belongs to the thioester dehydratase family. FabA subfamily. As to quaternary structure, homodimer.

Its subcellular location is the cytoplasm. It catalyses the reaction a (3R)-hydroxyacyl-[ACP] = a (2E)-enoyl-[ACP] + H2O. The enzyme catalyses (3R)-hydroxydecanoyl-[ACP] = (2E)-decenoyl-[ACP] + H2O. The catalysed reaction is (2E)-decenoyl-[ACP] = (3Z)-decenoyl-[ACP]. The protein operates within lipid metabolism; fatty acid biosynthesis. Functionally, necessary for the introduction of cis unsaturation into fatty acids. Catalyzes the dehydration of (3R)-3-hydroxydecanoyl-ACP to E-(2)-decenoyl-ACP and then its isomerization to Z-(3)-decenoyl-ACP. Can catalyze the dehydratase reaction for beta-hydroxyacyl-ACPs with saturated chain lengths up to 16:0, being most active on intermediate chain length. The chain is 3-hydroxydecanoyl-[acyl-carrier-protein] dehydratase from Saccharophagus degradans (strain 2-40 / ATCC 43961 / DSM 17024).